A 240-amino-acid chain; its full sequence is tRNA (guanine-N(7)-)-methyltransferase (240 aa).

The tract at residues 1-20 (MTESHDTPITPDGEARPHRR) is disordered. The S-adenosyl-L-methionine site is built by E70, E95, D122, and D145. The active site involves D145. Substrate is bound by residues K149, D181, and 218-221 (TKFE).

It belongs to the class I-like SAM-binding methyltransferase superfamily. TrmB family.

The catalysed reaction is guanosine(46) in tRNA + S-adenosyl-L-methionine = N(7)-methylguanosine(46) in tRNA + S-adenosyl-L-homocysteine. Its pathway is tRNA modification; N(7)-methylguanine-tRNA biosynthesis. Catalyzes the formation of N(7)-methylguanine at position 46 (m7G46) in tRNA. The protein is tRNA (guanine-N(7)-)-methyltransferase of Pseudomonas putida (strain ATCC 47054 / DSM 6125 / CFBP 8728 / NCIMB 11950 / KT2440).